We begin with the raw amino-acid sequence, 167 residues long: NADH-quinone oxidoreductase subunit I 1 (167 aa).

4Fe-4S ferredoxin-type domains are found at residues 52–82 (LQRD…IEAA) and 98–127 (KVYN…HGHG). [4Fe-4S] cluster-binding residues include cysteine 62, cysteine 65, cysteine 68, cysteine 72, cysteine 107, cysteine 110, cysteine 113, and cysteine 117. The disordered stretch occupies residues 148-167 (PVPPGAKPPSMADEVPAGAH).

This sequence belongs to the complex I 23 kDa subunit family. NDH-1 is composed of 14 different subunits. Subunits NuoA, H, J, K, L, M, N constitute the membrane sector of the complex. The cofactor is [4Fe-4S] cluster.

The protein resides in the cell inner membrane. The catalysed reaction is a quinone + NADH + 5 H(+)(in) = a quinol + NAD(+) + 4 H(+)(out). NDH-1 shuttles electrons from NADH, via FMN and iron-sulfur (Fe-S) centers, to quinones in the respiratory chain. The immediate electron acceptor for the enzyme in this species is believed to be ubiquinone. Couples the redox reaction to proton translocation (for every two electrons transferred, four hydrogen ions are translocated across the cytoplasmic membrane), and thus conserves the redox energy in a proton gradient. The sequence is that of NADH-quinone oxidoreductase subunit I 1 from Solibacter usitatus (strain Ellin6076).